The following is a 1196-amino-acid chain: DNA-directed RNA polymerase subunit 2 (1196 aa).

The segment at 1074–1095 (SRARGPTQLLTRQAPEGRSRDG) is disordered. The C4-type zinc-finger motif lies at 1133 to 1154 (CDSCGQFAHKVPEKKYYTCTGC).

Belongs to the RNA polymerase beta chain family.

It localises to the virion. The enzyme catalyses RNA(n) + a ribonucleoside 5'-triphosphate = RNA(n+1) + diphosphate. DNA-dependent RNA polymerase catalyzes the transcription of DNA into RNA using the four ribonucleoside triphosphates as substrates. The sequence is that of DNA-directed RNA polymerase subunit 2 (RPO2) from Acanthamoeba polyphaga mimivirus (APMV).